The chain runs to 90 residues: Large ribosomal subunit protein bL27 (90 aa).

Positions 1 to 22 are disordered; sequence MAHKKAGGSSRNGRDSESKRLG.

Belongs to the bacterial ribosomal protein bL27 family.

The protein is Large ribosomal subunit protein bL27 of Allorhizobium ampelinum (strain ATCC BAA-846 / DSM 112012 / S4) (Agrobacterium vitis (strain S4)).